The chain runs to 325 residues: Bifunctional nuclease 1 (325 aa).

Residues 117–252 (CVHNNPQGGH…YLAYSDGMRV (136 aa)) enclose the BFN domain. The UVR domain occupies 284-318 (TKEFNILSKMMQAVDEERYDEAAEWRDKLGQFRAK).

Belongs to the bifunctional nuclease family.

It is found in the nucleus. Bifunctional nuclease with both RNase and DNase activities. Involved in basal defense response. Participates in abscisic acid-derived callose deposition following infection by a necrotrophic pathogen. The protein is Bifunctional nuclease 1 (BBD1) of Arabidopsis thaliana (Mouse-ear cress).